The chain runs to 447 residues: Omega-6 fatty acid desaturase, chloroplastic (447 aa).

The N-terminal 65 residues, 1-65, are a transit peptide targeting the chloroplast; the sequence is MESAITISNH…TRRKSTLVQA (65 aa). Val-66 is subject to N-acetylvaline. Positions 171–175 match the Histidine box-1 motif; it reads HDCAH. Positions 207 to 211 match the Histidine box-2 motif; the sequence is HDQHH. Residues 367 to 371 carry the Histidine box-3 motif; the sequence is HIPHH.

Belongs to the fatty acid desaturase type 1 family.

It is found in the plastid. The protein resides in the chloroplast membrane. It catalyses the reaction a (9Z)-octadecenoyl-containing glycerolipid + 2 reduced [2Fe-2S]-[ferredoxin] + O2 + 2 H(+) = a (9Z,12Z)-octadecadienoyl-containing glycerolipid + 2 oxidized [2Fe-2S]-[ferredoxin] + 2 H2O. Its pathway is lipid metabolism; polyunsaturated fatty acid biosynthesis. In terms of biological role, chloroplast omega-6 fatty acid desaturase introduces the second double bond in the biosynthesis of 16:3 and 18:3 fatty acids, important constituents of plant membranes. It is thought to use ferredoxin as an electron donor and to act on fatty acids esterified to galactolipids, sulfolipids and phosphatidylglycerol. This chain is Omega-6 fatty acid desaturase, chloroplastic, found in Spinacia oleracea (Spinach).